Consider the following 173-residue polypeptide: Secreted RxLR effector protein RXLR-C12 (173 aa).

Positions 1 to 18 are cleaved as a signal peptide; the sequence is MLQFATAFLAISANVVMT. The RxLR-dEER motif lies at 41 to 55; the sequence is RRLRTHEIGTVPEER. Asn155 is a glycosylation site (N-linked (GlcNAc...) asparagine).

Belongs to the RxLR effector family.

It localises to the secreted. It is found in the host cytoplasm. The protein localises to the host nucleus. In terms of biological role, secreted effector that suppresses pattern-triggered immunity (PTI) in plant host. The protein is Secreted RxLR effector protein RXLR-C12 of Plasmopara halstedii (Downy mildew of sunflower).